Here is a 596-residue protein sequence, read N- to C-terminus: Elongation factor 4 (596 aa).

One can recognise a tr-type G domain in the interval 2-183 (KNIRNFSIIA…AIVDRIPAPV (182 aa)). GTP contacts are provided by residues 14-19 (DHGKST) and 130-133 (NKID).

The protein belongs to the TRAFAC class translation factor GTPase superfamily. Classic translation factor GTPase family. LepA subfamily.

It localises to the cell inner membrane. The enzyme catalyses GTP + H2O = GDP + phosphate + H(+). Functionally, required for accurate and efficient protein synthesis under certain stress conditions. May act as a fidelity factor of the translation reaction, by catalyzing a one-codon backward translocation of tRNAs on improperly translocated ribosomes. Back-translocation proceeds from a post-translocation (POST) complex to a pre-translocation (PRE) complex, thus giving elongation factor G a second chance to translocate the tRNAs correctly. Binds to ribosomes in a GTP-dependent manner. The protein is Elongation factor 4 of Sulfurimonas denitrificans (strain ATCC 33889 / DSM 1251) (Thiomicrospira denitrificans (strain ATCC 33889 / DSM 1251)).